Consider the following 323-residue polypeptide: Ubiquinone biosynthesis protein COQ4, mitochondrial (323 aa).

Residues H209, D210, H213, and E225 each coordinate Zn(2+).

It belongs to the COQ4 family. As to quaternary structure, component of a multi-subunit COQ enzyme complex, composed of at least COQ3, COQ4, COQ5, COQ6, COQ7 and COQ9. Zn(2+) is required as a cofactor.

It is found in the mitochondrion inner membrane. It carries out the reaction a 4-hydroxy-3-methoxy-5-(all-trans-polyprenyl)benzoate + H(+) = a 2-methoxy-6-(all-trans-polyprenyl)phenol + CO2. It participates in cofactor biosynthesis; ubiquinone biosynthesis. In terms of biological role, lyase that catalyzes the C1-decarboxylation of 4-hydroxy-3-methoxy-5-(all-trans-polyprenyl)benzoic acid into 2-methoxy-6-(all-trans-polyprenyl)phenol during ubiquinone biosynthesis. The polypeptide is Ubiquinone biosynthesis protein COQ4, mitochondrial (Debaryomyces hansenii (strain ATCC 36239 / CBS 767 / BCRC 21394 / JCM 1990 / NBRC 0083 / IGC 2968) (Yeast)).